Reading from the N-terminus, the 156-residue chain is Small ribosomal subunit protein uS7 (156 aa).

The protein belongs to the universal ribosomal protein uS7 family. Part of the 30S ribosomal subunit. Contacts proteins S9 and S11.

Functionally, one of the primary rRNA binding proteins, it binds directly to 16S rRNA where it nucleates assembly of the head domain of the 30S subunit. Is located at the subunit interface close to the decoding center, probably blocks exit of the E-site tRNA. The chain is Small ribosomal subunit protein uS7 from Thermobifida fusca (strain YX).